The primary structure comprises 255 residues: Type III pantothenate kinase (255 aa).

6-13 serves as a coordination point for ATP; that stretch reads DVGNTNTV. Substrate contacts are provided by residues Tyr-100 and 107–110; that span reads GADR. Asp-109 functions as the Proton acceptor in the catalytic mechanism. Asp-129 contributes to the K(+) binding site. Thr-132 lines the ATP pocket. Thr-184 lines the substrate pocket.

The protein belongs to the type III pantothenate kinase family. As to quaternary structure, homodimer. The cofactor is NH4(+). It depends on K(+) as a cofactor.

Its subcellular location is the cytoplasm. The enzyme catalyses (R)-pantothenate + ATP = (R)-4'-phosphopantothenate + ADP + H(+). The protein operates within cofactor biosynthesis; coenzyme A biosynthesis; CoA from (R)-pantothenate: step 1/5. Its function is as follows. Catalyzes the phosphorylation of pantothenate (Pan), the first step in CoA biosynthesis. This Acetivibrio thermocellus (strain ATCC 27405 / DSM 1237 / JCM 9322 / NBRC 103400 / NCIMB 10682 / NRRL B-4536 / VPI 7372) (Clostridium thermocellum) protein is Type III pantothenate kinase.